The sequence spans 142 residues: Hemoglobin subunit theta-1 (142 aa).

Residues 2–142 form the Globin domain; sequence ALSAEDRALV…VISALASEYR (141 aa). Heme b is bound by residues histidine 59 and histidine 88.

The protein belongs to the globin family.

The chain is Hemoglobin subunit theta-1 (HBQ1) from Pongo pygmaeus (Bornean orangutan).